Here is a 238-residue protein sequence, read N- to C-terminus: Ion-translocating oxidoreductase complex subunit E (238 aa).

The next 6 membrane-spanning stretches (helical) occupy residues 24-44 (ALWQ…TLAV), 52-72 (LGMG…ISSM), 84-104 (VMIG…NAWM), 106-126 (ELYK…AVLG), 141-161 (ILDG…IGGI), and 195-215 (GILL…LLAA).

The protein belongs to the NqrDE/RnfAE family. The complex is composed of six subunits: RnfA, RnfB, RnfC, RnfD, RnfE and RnfG.

The protein resides in the cell inner membrane. Functionally, part of a membrane-bound complex that couples electron transfer with translocation of ions across the membrane. This chain is Ion-translocating oxidoreductase complex subunit E, found in Azotobacter vinelandii (strain DJ / ATCC BAA-1303).